Consider the following 296-residue polypeptide: MIVPLQGAQMLQMLEKSLRKYLPESLKVYGTVYHMIHGNPFNLKALVDKWPDFNTVVVRPQEQEMTDDLDFYINTYQVYSKDPQNCQEFLESSEVINWKQHLQIQSSQSHLNKTIQNLASIQSFQIKHSENILYVSSETIKKLFPSLLDTKNLSTGSGKPKAIDQDKFKLSSLDVVHAALVNKFWLFGGNERSQRFIERCIKNFPSSCVLGPEGTPASWTLMDQTGEMRMGGTMPEYRLQGLVSFVVHSQDQIMTKRGYPVYSHTEKSNIAMQKMSYTLQHLPMPCAWNQWKCMPM.

K16 is subject to N6-acetyllysine; alternate. K16 is modified (N6-succinyllysine; alternate). N6-acetyllysine is present on K113. 3 positions are modified to N6-acetyllysine; alternate: K127, K141, and K142. An N6-succinyllysine; alternate mark is found at K127, K141, and K142. An N6-acetyllysine mark is found at K159 and K167. K169 carries the N6-succinyllysine modification. N6-acetyllysine; alternate occurs at positions 183 and 256. Residues K183 and K256 each carry the N6-succinyllysine; alternate modification. K267 carries the N6-succinyllysine modification.

Belongs to the glycine N-acyltransferase family.

Its subcellular location is the mitochondrion. It catalyses the reaction an acyl-CoA + glycine = an N-acylglycine + CoA + H(+). The enzyme catalyses benzoyl-CoA + glycine = N-benzoylglycine + CoA + H(+). Its function is as follows. Mitochondrial acyltransferase which transfers an acyl group to the N-terminus of glycine and glutamine, although much less efficiently. Can conjugate a multitude of substrates to form a variety of N-acylglycines, thereby detoxify xenobiotics, such as benzoic acid or salicylic acid, and endogenous organic acids, such as isovaleric acid. The protein is Glycine N-acyltransferase (Glyat) of Mus musculus (Mouse).